The chain runs to 270 residues: S-methyl-5'-thioadenosine phosphorylase (270 aa).

Phosphate-binding positions include Ser16, 58-59 (RH), and 91-92 (SA). 3 disulfides stabilise this stretch: Cys138/Cys205, Cys200/Cys262, and Cys259/Cys261. Substrate is bound at residue Met190. Thr191 contributes to the phosphate binding site. Residue 214–216 (DYD) coordinates substrate.

It belongs to the PNP/MTAP phosphorylase family. MTAP subfamily. Homohexamer. Dimer of a homotrimer.

It carries out the reaction S-methyl-5'-thioadenosine + phosphate = 5-(methylsulfanyl)-alpha-D-ribose 1-phosphate + adenine. Its pathway is amino-acid biosynthesis; L-methionine biosynthesis via salvage pathway; S-methyl-5-thio-alpha-D-ribose 1-phosphate from S-methyl-5'-thioadenosine (phosphorylase route): step 1/1. Its function is as follows. Catalyzes the reversible phosphorylation of S-methyl-5'-thioadenosine (MTA) to adenine and 5-methylthioribose-1-phosphate. Involved in the breakdown of MTA, a major by-product of polyamine biosynthesis. Responsible for the first step in the methionine salvage pathway after MTA has been generated from S-adenosylmethionine. Has broad substrate specificity with 6-aminopurine nucleosides as preferred substrates. This chain is S-methyl-5'-thioadenosine phosphorylase, found in Saccharolobus solfataricus (strain ATCC 35092 / DSM 1617 / JCM 11322 / P2) (Sulfolobus solfataricus).